The following is an 855-amino-acid chain: Transcription factor gaf1 (855 aa).

The span at K72–N112 shows a compositional bias: polar residues. Disordered stretches follow at residues K72–S126, T149–P184, S229–S287, P412–S483, N602–T643, and K680–M768. Basic and acidic residues predominate over residues T149–F168. Position 150 is a phosphoserine (S150). 2 stretches are compositionally biased toward low complexity: residues P240–N250 and N428–Q444. The span at E445 to L476 shows a compositional bias: polar residues. Positions A614–T623 are enriched in basic and acidic residues. 2 stretches are compositionally biased toward low complexity: residues R625–T643 and S707–A717. A GATA-type zinc finger spans residues C635 to C659. S727 and S729 each carry phosphoserine. Positions Q755 to S767 are enriched in low complexity.

It localises to the nucleus. Its function is as follows. Transcriptional activator. The polypeptide is Transcription factor gaf1 (gaf1) (Schizosaccharomyces pombe (strain 972 / ATCC 24843) (Fission yeast)).